The primary structure comprises 127 residues: Holo-[acyl-carrier-protein] synthase (127 aa).

D9 and E58 together coordinate Mg(2+).

This sequence belongs to the P-Pant transferase superfamily. AcpS family. Requires Mg(2+) as cofactor.

The protein localises to the cytoplasm. The catalysed reaction is apo-[ACP] + CoA = holo-[ACP] + adenosine 3',5'-bisphosphate + H(+). Its function is as follows. Transfers the 4'-phosphopantetheine moiety from coenzyme A to a Ser of acyl-carrier-protein. This is Holo-[acyl-carrier-protein] synthase from Shewanella sp. (strain MR-7).